We begin with the raw amino-acid sequence, 1894 residues long: Fibronectin type III domain-containing protein 1 (1894 aa).

The first 32 residues, 1–32 (MAPEAGATLRAPRRLSWAALLLLAALLPVASS), serve as a signal peptide directing secretion. Positions 39 to 131 (HPLKPRHVKL…PVYRAESPPG (93 aa)) constitute a Fibronectin type-III 1 domain. Asn-149 carries an N-linked (GlcNAc...) asparagine glycan. Fibronectin type-III domains lie at 158–258 (PNKP…SEED), 262–357 (VPDD…TPES), and 362–457 (APEN…MPTT). Disordered regions lie at residues 455–500 (PTTS…PQGR), 515–1271 (ANGG…TVSP), 1311–1350 (LSRQ…IING), and 1444–1515 (THPP…CPPG). Positions 565 to 574 (TLRPPSRHGH) are enriched in basic residues. Residues 614-625 (PSASASPAHHAS) show a composition bias toward low complexity. Over residues 626–641 (TQGTSHRPSLPASLND) the composition is skewed to polar residues. 2 stretches are compositionally biased toward low complexity: residues 711–722 (SASAPPSRLSPP) and 759–778 (SRST…TQVS). At Ser-717 the chain carries Phosphoserine. The segment covering 786–799 (GESHGDGDREDGGR) has biased composition (basic and acidic residues). Composition is skewed to polar residues over residues 941-957 (KYSS…QSTD) and 1027-1060 (SPSQ…TASS). Residues 1071–1088 (QDEDAQGSYDDDSTEVEA) show a composition bias toward acidic residues. Positions 1166 to 1176 (PLSSKSQQSVS) are enriched in polar residues. A compositionally biased stretch (low complexity) spans 1197-1209 (SSSVPKWPSSSTP). A compositionally biased stretch (basic and acidic residues) spans 1211–1226 (GGKDADGSLAKEEREP). A compositionally biased stretch (low complexity) spans 1445–1504 (HPPTTTMQPTTTTTPLPTTTTPRPTTATTRRTTTTRRTTTRRPTTTVRTTTRTTTTTTPT). One can recognise a Fibronectin type-III 5 domain in the interval 1658–1752 (APRNITVVAV…PSVSFVTESD (95 aa)). Asn-1661 carries an N-linked (GlcNAc...) asparagine glycan.

As to expression, almost absent from healthy skin; especially in epidermal keratinocytes, skin fibroblasts or endothelial cells and is barely detectable in benign melanocytic naevi. Expressed in the stroma close to skin tumors, in the tumor cells themselves and in the epidermis of psoriasis.

Its subcellular location is the secreted. May be an activator of G protein signaling. The sequence is that of Fibronectin type III domain-containing protein 1 (FNDC1) from Homo sapiens (Human).